Here is a 569-residue protein sequence, read N- to C-terminus: CUE domain-containing protein 5 (569 aa).

In terms of domain architecture, CUE spans 17 to 60 (MAEKARATLKEAFPNTDDAIIRAVLAASGYKLEPAFNALLGLSD). 3 disordered regions span residues 67-139 (MEQA…DDYS), 175-275 (DGEE…SSSA), and 311-569 (EELE…GKET). The segment covering 79–100 (AAHDDPVQRQLEEDERCARELA) has biased composition (basic and acidic residues). The segment covering 104–113 (NSHRPERRRK) has biased composition (basic residues). The span at 234 to 249 (SDPHMLNEKDFERLRL) shows a compositional bias: basic and acidic residues. Over residues 250–274 (ESSSSPMMRRSSLNSNRRSVESSSS) the composition is skewed to low complexity. Residues 329-340 (VVVEKKPDESRK) are compositionally biased toward basic and acidic residues. Positions 347 to 364 (ETVSEEQMGSSNAKSKVL) are enriched in polar residues. 3 stretches are compositionally biased toward basic and acidic residues: residues 367-381 (EPKDSTSVEAEKTET), 399-500 (ISEK…KETD), and 507-558 (KEEK…KIEE).

Its subcellular location is the cytoplasm. This Schizosaccharomyces pombe (strain 972 / ATCC 24843) (Fission yeast) protein is CUE domain-containing protein 5.